Reading from the N-terminus, the 464-residue chain is Citrate synthase, mitochondrial (464 aa).

The transit peptide at 1 to 27 (MALLTAATRLLGAKNSSCLVLAARHAS) directs the protein to the mitochondrion. Positions 2–21 (ALLTAATRLLGAKNSSCLVL) match the SIFI-degron motif. Lysine 57 carries the post-translational modification N6-succinyllysine. N6-acetyllysine; alternate is present on lysine 76. Lysine 76 is subject to N6-succinyllysine; alternate. N6-succinyllysine is present on residues lysine 103 and lysine 193. Phosphoserine is present on serine 226. Histidine 301 is an active-site residue. An N6-acetyllysine; alternate mark is found at lysine 321 and lysine 327. Residues lysine 321 and lysine 327 each carry the N6-succinyllysine; alternate modification. The active site involves histidine 347. Arginine 356 is an oxaloacetate binding site. The residue at position 375 (lysine 375) is an N6-acetyllysine; alternate. Lysine 375 carries the post-translational modification N6-succinyllysine; alternate. Lysine 382 bears the N6-acetyllysine mark. The residue at position 393 (lysine 393) is an N6-acetyllysine; alternate. Lysine 393 is subject to N6-succinyllysine; alternate. At lysine 395 the chain carries N6,N6,N6-trimethyllysine. Aspartate 402 is an active-site residue. Residues arginine 428 and arginine 448 each coordinate oxaloacetate. Lysine 450 carries the N6-succinyllysine modification. Lysine 459 is modified (N6-acetyllysine; alternate). Lysine 459 is subject to N6-succinyllysine; alternate.

The protein belongs to the citrate synthase family. Homodimer. In terms of processing, methylated. Trimethylation at Lys-395 by CSKMT decreases citrate synthase activity. Post-translationally, in response to mitochondrial stress, the precursor protein is ubiquitinated by the SIFI complex in the cytoplasm before mitochondrial import, leading to its degradation. Within the SIFI complex, UBR4 initiates ubiquitin chain that are further elongated or branched by KCMF1.

It is found in the mitochondrion matrix. The enzyme catalyses oxaloacetate + acetyl-CoA + H2O = citrate + CoA + H(+). The protein operates within carbohydrate metabolism; tricarboxylic acid cycle; isocitrate from oxaloacetate: step 1/2. In terms of biological role, key enzyme of the Krebs tricarboxylic acid cycle which catalyzes the synthesis of citrate from acetyl coenzyme A and oxaloacetate. The chain is Citrate synthase, mitochondrial (Cs) from Mus musculus (Mouse).